The sequence spans 1013 residues: Probable ubiquitination network signaling protein acrB (1013 aa).

Disordered regions lie at residues 1-65 (MPRS…NSDT) and 105-137 (SYGQ…GSNT). Polar residues predominate over residues 30–65 (QKSNGQLNGNANGSSAPISGPSSQVDWPSSRSNSDT). The next 3 helical transmembrane spans lie at 158–178 (IAIL…VQFL), 211–231 (LGTM…FMWT), and 254–274 (SGKN…LHLI). The interval 339–367 (RRSMAKNRAPAPPRTGKRVDTEASAGSQT) is disordered. The stretch at 596-782 (TTLKNSIVNA…REQDQAKVEA (187 aa)) forms a coiled coil. The segment covering 875–899 (SPLQHASSPIGPTSSRPTSPTQAPS) has biased composition (polar residues). 2 disordered regions span residues 875–902 (SPLQ…SYLQ) and 953–1013 (DLSE…GKGN). Basic and acidic residues predominate over residues 954 to 965 (LSEKVVDKRRSS). A compositionally biased stretch (gly residues) spans 993–1002 (SGSGGSGSGS). Positions 1003–1013 (GSPSSATGKGN) are enriched in low complexity.

Belongs to the acrB family.

The protein resides in the membrane. In terms of biological role, component of the regulatory network controlling carbon source utilization through ubiquitination and deubiquitination involving creA, creB, creC, creD and acrB. Involved in resistance to acriflavine, and required for normal growth on a range of sole carbon sources, including fructose, cellobiose, raffinose, and starch, and reduced utilization of amino acids, including GABA and beta-alanine, as sole carbon and nitrogen sources. In Aspergillus oryzae (strain ATCC 42149 / RIB 40) (Yellow koji mold), this protein is Probable ubiquitination network signaling protein acrB (acrB).